The sequence spans 128 residues: Translation initiation factor 5A (128 aa).

Lysine 35 carries the hypusine modification.

The protein belongs to the eIF-5A family.

It localises to the cytoplasm. Functions by promoting the formation of the first peptide bond. In Methanosarcina acetivorans (strain ATCC 35395 / DSM 2834 / JCM 12185 / C2A), this protein is Translation initiation factor 5A (eif5a).